We begin with the raw amino-acid sequence, 512 residues long: Glycerol kinase (512 aa).

Threonine 14 is an ADP binding site. Residues threonine 14, threonine 15, and serine 16 each contribute to the ATP site. Position 14 (threonine 14) interacts with sn-glycerol 3-phosphate. Arginine 18 provides a ligand contact to ADP. Sn-glycerol 3-phosphate is bound by residues arginine 83, glutamate 84, tyrosine 135, and aspartate 244. Glycerol is bound by residues arginine 83, glutamate 84, tyrosine 135, aspartate 244, and glutamine 245. 4 residues coordinate ADP: threonine 266, glycine 309, glycine 410, and asparagine 414. The ATP site is built by threonine 266, glycine 309, and glycine 410.

The protein belongs to the FGGY kinase family.

The enzyme catalyses glycerol + ATP = sn-glycerol 3-phosphate + ADP + H(+). The protein operates within polyol metabolism; glycerol degradation via glycerol kinase pathway; sn-glycerol 3-phosphate from glycerol: step 1/1. Its activity is regulated as follows. Inhibited by fructose 1,6-bisphosphate (FBP). Its function is as follows. Key enzyme in the regulation of glycerol uptake and metabolism. Catalyzes the phosphorylation of glycerol to yield sn-glycerol 3-phosphate. In Gluconobacter oxydans (strain 621H) (Gluconobacter suboxydans), this protein is Glycerol kinase.